We begin with the raw amino-acid sequence, 406 residues long: S-adenosylmethionine synthase (406 aa).

Position 5 (His5) interacts with ATP. Asp7 contributes to the Mg(2+) binding site. Residue Glu33 coordinates K(+). L-methionine-binding residues include Glu46 and Gln89. The tract at residues 89–99 (QSPDIAQGVDT) is flexible loop. ATP is bound by residues 164–166 (DGK), 240–241 (KF), Asp249, 255–256 (RK), Ala272, and Lys276. An L-methionine-binding site is contributed by Asp249. Lys280 contacts L-methionine.

It belongs to the AdoMet synthase family. Homotetramer; dimer of dimers. The cofactor is Mg(2+). It depends on K(+) as a cofactor.

It localises to the cytoplasm. The catalysed reaction is L-methionine + ATP + H2O = S-adenosyl-L-methionine + phosphate + diphosphate. Its pathway is amino-acid biosynthesis; S-adenosyl-L-methionine biosynthesis; S-adenosyl-L-methionine from L-methionine: step 1/1. Functionally, catalyzes the formation of S-adenosylmethionine (AdoMet) from methionine and ATP. The overall synthetic reaction is composed of two sequential steps, AdoMet formation and the subsequent tripolyphosphate hydrolysis which occurs prior to release of AdoMet from the enzyme. The chain is S-adenosylmethionine synthase from Synechococcus sp. (strain ATCC 27144 / PCC 6301 / SAUG 1402/1) (Anacystis nidulans).